Consider the following 196-residue polypeptide: tRNA(Phe) 7-((3-amino-3-carboxypropyl)-4-demethylwyosine(37)-N(4))-methyltransferase 1 (196 aa).

The protein belongs to the TYW3 family.

It carries out the reaction 4-demethyl-7-[(3S)-3-amino-3-carboxypropyl]wyosine(37) in tRNA(Phe) + S-adenosyl-L-methionine = 7-[(3S)-3-amino-3-carboxypropyl]wyosine(37) in tRNA(Phe) + S-adenosyl-L-homocysteine + H(+). Its function is as follows. S-adenosyl-L-methionine-dependent methyltransferase that acts as a component of the wyosine derivatives biosynthesis pathway. Probably methylates N-4 position of wybutosine-86 to produce wybutosine-72. The protein is tRNA(Phe) 7-((3-amino-3-carboxypropyl)-4-demethylwyosine(37)-N(4))-methyltransferase 1 of Pyrococcus furiosus (strain ATCC 43587 / DSM 3638 / JCM 8422 / Vc1).